Reading from the N-terminus, the 934-residue chain is AP-2 complex subunit alpha (934 aa).

The segment at 623–670 (RVPENAEIRETKSPVPNSHNNAHSNAQTNHTSSANNANASSDLLGLST) is disordered. A compositionally biased stretch (polar residues) spans 636 to 645 (PVPNSHNNAH). A compositionally biased stretch (low complexity) spans 646-663 (SNAQTNHTSSANNANASS).

Belongs to the adapter complexes large subunit family. Adaptor protein complex 2 (AP-2) is a heterotetramer composed of two large adaptins (alpha-type and beta-type subunits), a medium adaptin (mu-type subunit AP50) and a small adaptin (sigma-type subunit AP17).

It is found in the cell membrane. Its subcellular location is the membrane. It localises to the coated pit. Adaptins are components of the adapter complexes which link clathrin to receptors in coated vesicles. Clathrin-associated protein complexes are believed to interact with the cytoplasmic tails of membrane proteins, leading to their selection and concentration. Alpha adaptin is a subunit of the plasma membrane adapter. The polypeptide is AP-2 complex subunit alpha (Anopheles gambiae (African malaria mosquito)).